A 128-amino-acid polypeptide reads, in one-letter code: Small ribosomal subunit protein uS8 (128 aa).

It belongs to the universal ribosomal protein uS8 family. As to quaternary structure, part of the 30S ribosomal subunit. Contacts proteins S5 and S12.

In terms of biological role, one of the primary rRNA binding proteins, it binds directly to 16S rRNA central domain where it helps coordinate assembly of the platform of the 30S subunit. This chain is Small ribosomal subunit protein uS8, found in Methylacidiphilum infernorum (isolate V4) (Methylokorus infernorum (strain V4)).